A 552-amino-acid polypeptide reads, in one-letter code: Putative transport protein ECA4401 (552 aa).

Transmembrane regions (helical) follow at residues 4-24 (IALT…IGNW), 26-46 (IYGV…VGHV), 65-85 (FGLI…FFSS), 90-112 (GLRL…VMLH), and 158-178 (TGYA…MWLM). RCK C-terminal domains lie at 191-276 (KQFE…VIGN) and 279-361 (ETSL…IVGN). 6 helical membrane passes run 371 to 391 (MLPV…PLMV), 393 to 413 (GFPV…ALVL), 439 to 459 (IVLF…DTLL), 464 to 484 (VWWI…VGIL), 493 to 513 (YLTL…LAFA), and 530 to 550 (VYPL…VLFL).

Belongs to the AAE transporter (TC 2.A.81) family. YidE subfamily.

The protein localises to the cell membrane. This chain is Putative transport protein ECA4401, found in Pectobacterium atrosepticum (strain SCRI 1043 / ATCC BAA-672) (Erwinia carotovora subsp. atroseptica).